The primary structure comprises 551 residues: Pyrroline-5-carboxylate reductase 1 (551 aa).

Residues 279–551 are disordered; that stretch reads LYTQKQQNKK…RHEVKTEQIN (273 aa). 7 stretches are compositionally biased toward low complexity: residues 282 to 298, 306 to 342, 383 to 415, 424 to 441, 448 to 475, 487 to 496, and 503 to 520; these read QKQQ…QQHQ, QQHQ…YGHQ, QQYQ…SNQR, KSPQ…QPSS, QQQQ…QQQP, QQQQPQQQQQ, and YNNN…NNYN. Positions 537 to 551 are enriched in basic and acidic residues; the sequence is YHDEKRHEVKTEQIN.

The protein belongs to the pyrroline-5-carboxylate reductase family. Homodecamer; composed of 5 homodimers.

The enzyme catalyses L-proline + NADP(+) = (S)-1-pyrroline-5-carboxylate + NADPH + 2 H(+). It carries out the reaction L-proline + NAD(+) = (S)-1-pyrroline-5-carboxylate + NADH + 2 H(+). It participates in amino-acid biosynthesis; L-proline biosynthesis; L-proline from L-glutamate 5-semialdehyde: step 1/1. The sequence is that of Pyrroline-5-carboxylate reductase 1 (pycr1) from Dictyostelium discoideum (Social amoeba).